A 460-amino-acid chain; its full sequence is Argininosuccinate lyase (460 aa).

The protein belongs to the lyase 1 family. Argininosuccinate lyase subfamily.

It localises to the cytoplasm. It carries out the reaction 2-(N(omega)-L-arginino)succinate = fumarate + L-arginine. It functions in the pathway amino-acid biosynthesis; L-arginine biosynthesis; L-arginine from L-ornithine and carbamoyl phosphate: step 3/3. The protein is Argininosuccinate lyase of Alteromonas mediterranea (strain DSM 17117 / CIP 110805 / LMG 28347 / Deep ecotype).